Reading from the N-terminus, the 428-residue chain is MKIYKLQTPVNAILENIAADKSISHRFAIFSLLTQEENKAQNYLLAQDTLNTLEIIKNLGAKIEQKDSCVKIIPPKEILSPNCILDCGNSGTAMRLMIGFLAGISGFFVLSGDKYLNNRPMRRISKPLTQIGARIYGRNEANLAPLCIEGQKLKAFNFKSEISSAQVKTAMILSAFRADNVCTFSEISLSRNHSENMLKAMKAPIRVSNDDLSLEINPLKKPLKAQNIIIPNDPSSAFYFVLAAIILPKSQIILKNILLNPTRIEAYKILQKMGAKLEMTITQNDFETIGEIRVESSKLNGIEVKDNIAWLIDEAPALAIAFALAKGKSSLINAKELRVKESDRIAVMVENLKLCGVEARELDDGFEIEGGCELKSSKIKSYGDHRIAMSFAILGLLCGIEIDDSDCIKTSFPNFIEILSNLGARIDY.

Positions 21, 22, and 26 each coordinate 3-phosphoshikimate. Lysine 21 contributes to the phosphoenolpyruvate binding site. Phosphoenolpyruvate is bound by residues glycine 91 and arginine 119. Positions 164, 166, 313, and 340 each coordinate 3-phosphoshikimate. Glutamine 166 provides a ligand contact to phosphoenolpyruvate. Aspartate 313 acts as the Proton acceptor in catalysis. The phosphoenolpyruvate site is built by arginine 344 and arginine 386.

It belongs to the EPSP synthase family. Monomer.

Its subcellular location is the cytoplasm. It catalyses the reaction 3-phosphoshikimate + phosphoenolpyruvate = 5-O-(1-carboxyvinyl)-3-phosphoshikimate + phosphate. The protein operates within metabolic intermediate biosynthesis; chorismate biosynthesis; chorismate from D-erythrose 4-phosphate and phosphoenolpyruvate: step 6/7. Its function is as follows. Catalyzes the transfer of the enolpyruvyl moiety of phosphoenolpyruvate (PEP) to the 5-hydroxyl of shikimate-3-phosphate (S3P) to produce enolpyruvyl shikimate-3-phosphate and inorganic phosphate. The chain is 3-phosphoshikimate 1-carboxyvinyltransferase from Campylobacter jejuni subsp. jejuni serotype O:23/36 (strain 81-176).